We begin with the raw amino-acid sequence, 538 residues long: Mitochondria-eating protein (538 aa).

Residues 1-273 are interaction with YWHAG/14-3-3 protein gamma; sequence MAENLKRLVS…PRSRSCSRSR (273 aa). A Phosphoserine modification is found at S85. The tract at residues 92–137 is disordered; sequence GKPVDSKVPSLQNTFDRERRKDPSPRDRDMQQLDSNLNSTRSQLNQ. Basic and acidic residues predominate over residues 106–122; that stretch reads FDRERRKDPSPRDRDMQ. 2 coiled-coil regions span residues 118–186 and 220–256; these read DRDM…ARHR and QRDT…RSSR. Polar residues predominate over residues 123–137; the sequence is QLDSNLNSTRSQLNQ. 2 positions are modified to phosphoserine: S156 and S159. Disordered regions lie at residues 174–227 and 247–292; these read LKTL…EVTS and KSAL…NRSK. 2 stretches are compositionally biased toward basic and acidic residues: residues 181-209 and 216-227; these read EDAR…RRCE and RNADQRDTEVTS. The span at 253-278 shows a compositional bias: low complexity; it reads RSSRSRSPSPAPRSRSCSRSRSASPS. Phosphoserine is present on residues S285, S287, and S509.

This sequence belongs to the MIEAP family. In terms of assembly, interacts (via coiled-coil domains) with BNIP3L (via BH3 domain). Interacts (via coiled-coil domains) with BNIP3 (via BH3 domain). Interacts with YWHAG/14-3-3 protein gamma; a protein that also plays a role in MALM.

The protein resides in the cytoplasm. It localises to the cytosol. Its subcellular location is the mitochondrion outer membrane. It is found in the mitochondrion matrix. Functionally, key regulator of mitochondrial quality that mediates the repairing or degradation of unhealthy mitochondria in response to mitochondrial damage. Mediator of mitochondrial protein catabolic process (also named MALM) by mediating the degradation of damaged proteins inside mitochondria by promoting the accumulation in the mitochondrial matrix of hydrolases that are characteristic of the lysosomal lumen. Also involved in mitochondrion degradation of damaged mitochondria by promoting the formation of vacuole-like structures (named MIV), which engulf and degrade unhealthy mitochondria by accumulating lysosomes. The physical interaction of SPATA18/MIEAP, BNIP3 and BNIP3L/NIX at the mitochondrial outer membrane regulates the opening of a pore in the mitochondrial double membrane in order to mediate the translocation of lysosomal proteins from the cytoplasm to the mitochondrial matrix. Binds cardiolipin. May form molecular condensates (non-membrane-bounded organelles) within mitochondria that compartmentalize and promote cardiolipin metabolism. The protein is Mitochondria-eating protein (SPATA18) of Macaca fascicularis (Crab-eating macaque).